A 726-amino-acid polypeptide reads, in one-letter code: Eukaryotic translation initiation factor 3 subunit B (726 aa).

Residues methionine 1 to aspartate 94 form a sufficient for interaction with HCR1 and TIF32 region. The interval methionine 1–phenylalanine 219 is sufficient for interaction with PIC8. Residues glutamine 37–aspartate 120 enclose the RRM domain. 7 WD repeats span residues phenylalanine 142–valine 182, arginine 186–arginine 224, valine 235–threonine 283, leucine 331–lysine 374, glutamate 442–glutamate 485, isoleucine 505–asparagine 549, and asparagine 566–glutamate 611.

This sequence belongs to the eIF-3 subunit B family. Component of the eukaryotic translation initiation factor 3 (eIF-3) complex.

Its subcellular location is the cytoplasm. Its function is as follows. RNA-binding component of the eukaryotic translation initiation factor 3 (eIF-3) complex, which is involved in protein synthesis of a specialized repertoire of mRNAs and, together with other initiation factors, stimulates binding of mRNA and methionyl-tRNAi to the 40S ribosome. The eIF-3 complex specifically targets and initiates translation of a subset of mRNAs involved in cell proliferation. This is Eukaryotic translation initiation factor 3 subunit B from Vanderwaltozyma polyspora (strain ATCC 22028 / DSM 70294 / BCRC 21397 / CBS 2163 / NBRC 10782 / NRRL Y-8283 / UCD 57-17) (Kluyveromyces polysporus).